We begin with the raw amino-acid sequence, 193 residues long: Peptidyl-tRNA hydrolase (193 aa).

Tyrosine 15 provides a ligand contact to tRNA. The active-site Proton acceptor is histidine 20. TRNA-binding residues include phenylalanine 65, asparagine 67, and asparagine 113.

It belongs to the PTH family. In terms of assembly, monomer.

Its subcellular location is the cytoplasm. It catalyses the reaction an N-acyl-L-alpha-aminoacyl-tRNA + H2O = an N-acyl-L-amino acid + a tRNA + H(+). Hydrolyzes ribosome-free peptidyl-tRNAs (with 1 or more amino acids incorporated), which drop off the ribosome during protein synthesis, or as a result of ribosome stalling. In terms of biological role, catalyzes the release of premature peptidyl moieties from peptidyl-tRNA molecules trapped in stalled 50S ribosomal subunits, and thus maintains levels of free tRNAs and 50S ribosomes. The chain is Peptidyl-tRNA hydrolase from Ehrlichia canis (strain Jake).